Reading from the N-terminus, the 376-residue chain is Probable low-specificity L-threonine aldolase (376 aa).

The segment covering 1–21 has biased composition (polar residues); it reads MSGSVTSTTTETRLCPSNQGS. A disordered region spans residues 1-22; sequence MSGSVTSTTTETRLCPSNQGSA. N6-(pyridoxal phosphate)lysine is present on Lys-226.

This sequence belongs to the threonine aldolase family. Homotetramer. It depends on pyridoxal 5'-phosphate as a cofactor.

It carries out the reaction L-threonine = acetaldehyde + glycine. It catalyses the reaction L-allo-threonine = acetaldehyde + glycine. It participates in amino-acid degradation; L-threonine degradation via aldolase pathway; acetaldehyde and glycine from L-threonine: step 1/1. The sequence is that of Probable low-specificity L-threonine aldolase (gly1) from Schizosaccharomyces pombe (strain 972 / ATCC 24843) (Fission yeast).